We begin with the raw amino-acid sequence, 298 residues long: Large ribosomal subunit protein uL18 (298 aa).

The protein belongs to the universal ribosomal protein uL18 family. Component of the large ribosomal subunit. Mature ribosomes consist of a small (40S) and a large (60S) subunit. The 40S subunit contains about 32 different proteins and 1 molecule of RNA (18S). The 60S subunit contains 45 different proteins and 3 molecules of RNA (25S, 5.8S and 5S).

Its subcellular location is the cytoplasm. In terms of biological role, component of the ribosome, a large ribonucleoprotein complex responsible for the synthesis of proteins in the cell. The small ribosomal subunit (SSU) binds messenger RNAs (mRNAs) and translates the encoded message by selecting cognate aminoacyl-transfer RNA (tRNA) molecules. The large subunit (LSU) contains the ribosomal catalytic site termed the peptidyl transferase center (PTC), which catalyzes the formation of peptide bonds, thereby polymerizing the amino acids delivered by tRNAs into a polypeptide chain. The nascent polypeptides leave the ribosome through a tunnel in the LSU and interact with protein factors that function in enzymatic processing, targeting, and the membrane insertion of nascent chains at the exit of the ribosomal tunnel. This Candida albicans (strain SC5314 / ATCC MYA-2876) (Yeast) protein is Large ribosomal subunit protein uL18.